Reading from the N-terminus, the 96-residue chain is uncharacterized protein (96 aa).

Its subcellular location is the mitochondrion. This is an uncharacterized protein from Saccharomyces cerevisiae (strain ATCC 204508 / S288c) (Baker's yeast).